We begin with the raw amino-acid sequence, 21 residues long: Protein YliM (21 aa).

The sequence is that of Protein YliM from Escherichia coli (strain K12).